We begin with the raw amino-acid sequence, 1192 residues long: Plakophilin-4 (1192 aa).

Residues 1 to 31 (MPAPEQASLVEEGQPQTRQEAASTGPGMEPE) are disordered. Residues 36-70 (TILASVKEQELQFQRLTRELEVERQIVASQLERCR) adopt a coiled-coil conformation. The interval 73–262 (AESPSIASTS…PRPLNPSAYS (190 aa)) is disordered. At serine 75 the chain carries Phosphoserine. The segment covering 77–86 (SIASTSSTEK) has biased composition (polar residues). Residue threonine 84 is modified to Phosphothreonine. Phosphoserine occurs at positions 106, 132, 136, and 139. 3 stretches are compositionally biased toward polar residues: residues 138 to 156 (GSLGNSRSSTQMNSYSDSG), 163 to 204 (FHNS…QPSV), and 214 to 230 (SVPSRAQSPSYVISTGV). Phosphoserine occurs at positions 221, 231, and 236. A compositionally biased stretch (low complexity) spans 231 to 242 (SPSRGSLRTSLG). An omega-N-methylarginine mark is found at arginine 254 and arginine 270. A phosphoserine mark is found at serine 273 and serine 281. Residues 290–310 (SVTSRQTSNPNGPTPQYQTTA) form a disordered region. Serine 314, serine 327, and serine 337 each carry phosphoserine. A disordered region spans residues 323–348 (TRVASPSQGQVGSSSPKRSGMTAVPQ). Low complexity predominate over residues 325-338 (VASPSQGQVGSSSP). Tyrosine 372 carries the post-translational modification Phosphotyrosine. Serine 392, serine 403, and serine 406 each carry phosphoserine. Threonine 412 is modified (phosphothreonine). Position 415 is a phosphotyrosine (tyrosine 415). Residues 415-455 (YEGRTYYSPVYRSPNHGTVELQGSQTALYRTGSVGIGNLQR) form an ARM 1 repeat. Serine 422, serine 427, and serine 438 each carry phosphoserine. The residue at position 478 (tyrosine 478) is a Phosphotyrosine. Phosphoserine occurs at positions 510, 512, and 515. ARM repeat units lie at residues 518 to 557 (KDPREFAWRDPELPEVIHMLQHQFPSVQANAAAYLQHLCF), 560 to 599 (NKVKMEVCRLGGIKHLVDLLDHRVLEVQKNACGALRNLVF), 604 to 644 (DENK…NLSS), 660 to 702 (LTNT…NLSS), and 706 to 751 (EARK…NLSY). Positions 773–782 (GKESPSKDSE) are enriched in basic and acidic residues. The segment at 773-810 (GKESPSKDSEPSCWGKKKKKKKRTPQEDQWDGVGPIPG) is disordered. Serine 776 is modified (phosphoserine). ARM repeat units lie at residues 815–855 (PKGV…NLSA), 862–901 (AYIRAAVRKEKGLPILVELLRMDNDRVVSSVATALRNMAL), and 950–993 (MENA…TLWQ). Residues threonine 1013 and threonine 1017 each carry the phosphothreonine modification. At serine 1045 the chain carries Phosphoserine. The interval 1058-1086 (PRSEYDRTQPPMQYYNSQGDATHKGLYPG) is disordered. Polar residues predominate over residues 1067–1077 (PPMQYYNSQGD). Residues serine 1091, serine 1100, and serine 1135 each carry the phosphoserine modification.

It belongs to the beta-catenin family. In terms of assembly, interacts with PDZD2. Interacts (via the C-terminus) with FRMPD2 (via the PDZ 2 domain). Interacts with RHOA; the interaction is detected at the midbody. Interacts with ECT2; the interaction is detected at the midbody. Interacts with CCDC85B. Expressed in salivary glands (at protein level). Expressed in arrector pili muscle (at protein level).

The protein resides in the cell junction. Its subcellular location is the desmosome. It is found in the cytoplasm. It localises to the cytoskeleton. The protein localises to the spindle. The protein resides in the midbody. Its subcellular location is the cell membrane. In terms of biological role, plays a role as a regulator of Rho activity during cytokinesis. May play a role in junctional plaques. The chain is Plakophilin-4 (PKP4) from Homo sapiens (Human).